Here is a 1208-residue protein sequence, read N- to C-terminus: Defective chorion protein, FC125 isoform (1208 aa).

The first 19 residues, 1–19 (MRLFSLLPLLALLVVQAAG), serve as a signal peptide directing secretion. 3 disordered regions span residues 23-60 (VTSD…PSIN), 184-212 (APAP…PDAP), and 268-294 (PAQP…EDPY). The span at 32 to 41 (AGSTTNSTTD) shows a compositional bias: polar residues. The span at 268–280 (PAQPAAAGTDAQA) shows a compositional bias: low complexity. A run of 5 repeats spans residues 493-518 (QNPM…QQIQ), 519-544 (QNPM…QQIQ), 545-570 (QNPM…QQIQ), 571-596 (QNPM…QQIQ), and 597-622 (QNPM…QQIQ). The segment at 493 to 788 (QNPMMMQQRQ…IQQQQRQMMQ (296 aa)) is 12 X 26 AA approximate tandem repeats, Glu, Met-rich. A 6; approximate repeat occupies 623–652 (QNPMMMQQRQWSEEQAKIQHDQQMAQQMAQ). Residues 653–680 (QGLMMTEQRQRQWSEDQAKIQQAQQMAQ) form a 7; approximate repeat. The stretch at 681-696 (QTPMMMPQMQQRQWTE) is one 8; approximate repeat. Residues 697-720 (DPQMVQQMQQRQWAEDQTRMQMAQ) form a 9; approximate repeat. A 10; approximate repeat occupies 721 to 733 (QNPMMQQQRQMAE). One copy of the 11; approximate repeat lies at 734–758 (NPQMMQQRQWSEEQTKIEQAQQMAQ). One copy of the 12; approximate repeat lies at 759–788 (QNQMMMQQMQQRQWSEDQAQIQQQQRQMMQ). Residues 828-839 (EDEDNKAEDDLV) show a composition bias toward acidic residues. Disordered regions lie at residues 828–875 (EDED…SKSA), 944–1010 (RTIN…GSIF), and 1114–1208 (VQPP…DVDD). Polar residues predominate over residues 957-977 (SESQKSNSNPPTTLTPAPQEQ). Composition is skewed to acidic residues over residues 1163–1178 (PEPD…EPSE) and 1194–1208 (NDID…DVDD).

It is found in the secreted. Its function is as follows. Required for proper assembly of the eggshell. This Drosophila melanogaster (Fruit fly) protein is Defective chorion protein, FC125 isoform.